Reading from the N-terminus, the 242-residue chain is Biosynthetic peptidoglycan transglycosylase (242 aa).

The helical transmembrane segment at 19–39 (LMVVLAIFWGGGIALFSVAPV) threads the bilayer.

It belongs to the glycosyltransferase 51 family.

The protein localises to the cell inner membrane. It carries out the reaction [GlcNAc-(1-&gt;4)-Mur2Ac(oyl-L-Ala-gamma-D-Glu-L-Lys-D-Ala-D-Ala)](n)-di-trans,octa-cis-undecaprenyl diphosphate + beta-D-GlcNAc-(1-&gt;4)-Mur2Ac(oyl-L-Ala-gamma-D-Glu-L-Lys-D-Ala-D-Ala)-di-trans,octa-cis-undecaprenyl diphosphate = [GlcNAc-(1-&gt;4)-Mur2Ac(oyl-L-Ala-gamma-D-Glu-L-Lys-D-Ala-D-Ala)](n+1)-di-trans,octa-cis-undecaprenyl diphosphate + di-trans,octa-cis-undecaprenyl diphosphate + H(+). Its pathway is cell wall biogenesis; peptidoglycan biosynthesis. Its function is as follows. Peptidoglycan polymerase that catalyzes glycan chain elongation from lipid-linked precursors. In Escherichia coli O45:K1 (strain S88 / ExPEC), this protein is Biosynthetic peptidoglycan transglycosylase.